We begin with the raw amino-acid sequence, 164 residues long: Peptidyl-prolyl cis-trans isomerase A (164 aa).

Position 1 is an N-acetylmethionine (Met1). N-acetylvaline; in Peptidyl-prolyl cis-trans isomerase A, N-terminally processed is present on Val2. The 157-residue stretch at 7–163 folds into the PPIase cyclophilin-type domain; the sequence is FFDISADGEP…KKITISDCGQ (157 aa). Lys28 is modified (N6-acetyllysine; alternate). Residue Lys28 forms a Glycyl lysine isopeptide (Lys-Gly) (interchain with G-Cter in SUMO2); alternate linkage. Residue Lys28 forms a Glycyl lysine isopeptide (Lys-Gly) (interchain with G-Cter in ubiquitin); alternate linkage. Lys44 is subject to N6-acetyllysine. Position 77 is a phosphoserine (Ser77). An N6-acetyllysine; alternate modification is found at Lys82. A Glycyl lysine isopeptide (Lys-Gly) (interchain with G-Cter in SUMO2); alternate cross-link involves residue Lys82. The residue at position 93 (Thr93) is a Phosphothreonine. A glycan (N-linked (GlcNAc...) asparagine) is linked at Asn108. N6-acetyllysine occurs at positions 125, 131, and 133.

Belongs to the cyclophilin-type PPIase family. PPIase A subfamily. As to quaternary structure, interacts with protein phosphatase PPP3CA/calcineurin A. Interacts with PRPF19 isoform 2 (via N-terminus). Interacts with isoform 2 of BSG/CD147. Interacts with FOXO1; the interaction promotes FOXO1 dephosphorylation, nuclear accumulation and transcriptional activity. Interacts with integrin ITGA2B:ITGB3; the interaction is ROS and peptidyl-prolyl cis-trans isomerase (PPIase) activity-dependent and is increased in the presence of thrombin. Interacts with MAP3K5. Interacts with TARDBP; the interaction is dependent on the RNA-binding activity of TARDBP and the PPIase activity of PPIA/CYPA and the acetylation of PPIA/CYPA at Lys-125 favors the interaction. Interacts with HNRNPA1, HNRNPA2B1, HNRNPC, RBMX, HNRNPK and HNRNPM. In terms of processing, acetylation at Lys-125 markedly inhibits catalysis of cis to trans isomerization. PPIA acetylation also antagonizes the immunosuppressive effects of cyclosporine by inhibiting the sequential steps of cyclosporine binding and calcineurin inhibition. Acetylation at Lys-125 favors the interaction with TARDBP.

Its subcellular location is the cytoplasm. The protein localises to the secreted. It is found in the nucleus. The catalysed reaction is [protein]-peptidylproline (omega=180) = [protein]-peptidylproline (omega=0). Its activity is regulated as follows. Binds cyclosporin A (CsA). CsA mediates some of its effects via an inhibitory action on PPIase. Functionally, catalyzes the cis-trans isomerization of proline imidic peptide bonds in oligopeptides. Exerts a strong chemotactic effect on leukocytes partly through activation of one of its membrane receptors BSG/CD147, initiating a signaling cascade that culminates in MAPK/ERK activation. Activates endothelial cells (ECs) in a proinflammatory manner by stimulating activation of NF-kappa-B and ERK, JNK and p38 MAP-kinases and by inducing expression of adhesion molecules including SELE and VCAM1. Induces apoptosis in ECs by promoting the FOXO1-dependent expression of CCL2 and BCL2L11 which are involved in EC chemotaxis and apoptosis. In response to oxidative stress, initiates proapoptotic and antiapoptotic signaling in ECs via activation of NF-kappa-B and AKT1 and up-regulation of antiapoptotic protein BCL2. Negatively regulates MAP3K5/ASK1 kinase activity, autophosphorylation and oxidative stress-induced apoptosis mediated by MAP3K5/ASK1. Necessary for the assembly of TARDBP in heterogeneous nuclear ribonucleoprotein (hnRNP) complexes and regulates TARDBP binding to RNA UG repeats and TARDBP-dependent expression of HDAC6, ATG7 and VCP which are involved in clearance of protein aggregates. Plays an important role in platelet activation and aggregation. Regulates calcium mobilization and integrin ITGA2B:ITGB3 bidirectional signaling via increased ROS production as well as by facilitating the interaction between integrin and the cell cytoskeleton. Binds heparan sulfate glycosaminoglycans. This chain is Peptidyl-prolyl cis-trans isomerase A (PPIA), found in Cricetulus griseus (Chinese hamster).